A 103-amino-acid chain; its full sequence is Large ribosomal subunit protein bL21 (103 aa).

Belongs to the bacterial ribosomal protein bL21 family. Part of the 50S ribosomal subunit. Contacts protein L20.

Functionally, this protein binds to 23S rRNA in the presence of protein L20. The polypeptide is Large ribosomal subunit protein bL21 (Shewanella frigidimarina (strain NCIMB 400)).